The following is a 210-amino-acid chain: Pyridoxine/pyridoxamine 5'-phosphate oxidase (210 aa).

Substrate contacts are provided by residues 7–10 and Lys65; that span reads REDY. Residues 60-65, 75-76, Arg81, Lys82, and Gln104 each bind FMN; these read RVVLLK and FT. Tyr122, Arg126, and Ser130 together coordinate substrate. FMN-binding positions include 139–140 and Trp183; that span reads QS. A substrate-binding site is contributed by 189 to 191; it reads RLH. Arg193 contacts FMN.

This sequence belongs to the pyridoxamine 5'-phosphate oxidase family. Homodimer. The cofactor is FMN.

It catalyses the reaction pyridoxamine 5'-phosphate + O2 + H2O = pyridoxal 5'-phosphate + H2O2 + NH4(+). The enzyme catalyses pyridoxine 5'-phosphate + O2 = pyridoxal 5'-phosphate + H2O2. Its pathway is cofactor metabolism; pyridoxal 5'-phosphate salvage; pyridoxal 5'-phosphate from pyridoxamine 5'-phosphate: step 1/1. It participates in cofactor metabolism; pyridoxal 5'-phosphate salvage; pyridoxal 5'-phosphate from pyridoxine 5'-phosphate: step 1/1. In terms of biological role, catalyzes the oxidation of either pyridoxine 5'-phosphate (PNP) or pyridoxamine 5'-phosphate (PMP) into pyridoxal 5'-phosphate (PLP). In Actinobacillus succinogenes (strain ATCC 55618 / DSM 22257 / CCUG 43843 / 130Z), this protein is Pyridoxine/pyridoxamine 5'-phosphate oxidase.